The primary structure comprises 1294 residues: CLIP-associating protein 2 (1294 aa).

The interval 1-61 (MAMGDDKSFD…KVGGASKEGG (61 aa)) is disordered. A phosphoserine mark is found at serine 8 and serine 14. Over residues 47 to 61 (SAGGPKVGGASKEGG) the composition is skewed to gly residues. The interval 60 to 311 (GGAGAVDEDD…KSLQTYLKSS (252 aa)) is TOG 1. HEAT repeat units lie at residues 173–208 (HGAEAIVPTLFNLVPNSAKVMATSGCAAIRFIIRHT), 209–245 (HVPRLIPLITSNCTSKSVPVRRRSFEFLDLLLQEWQT), and 250–287 (RHAAVLVETIKKGIHDADAEARVEARKTYMGLRNHFPG). Residues 314-368 (VASLPQSDRSSSSSQESLNRPFSSKWSTANPSTVAGRVSAGSSKASSLPGSLQRS) form a disordered region. Serine 316, serine 327, and serine 330 each carry phosphoserine. Residues 316 to 334 (SLPQSDRSSSSSQESLNRP) show a composition bias toward low complexity. Composition is skewed to polar residues over residues 335-346 (FSSKWSTANPST) and 353-367 (AGSSKASSLPGSLQR). Serine 360, serine 368, serine 370, and serine 407 each carry phosphoserine. The interval 409-467 (EDTSDKLDGTASEDGRVRAKLSAPLAGMGNAKADSRGRSRTKMVSQSQPGSRSGSPGRV) is disordered. The segment covering 411 to 425 (TSDKLDGTASEDGRV) has biased composition (basic and acidic residues). Residues 444–580 (RGRSRTKMVS…GPGYGISQSS (137 aa)) form an interaction with microtubules, MAPRE1 and MAPRE3 region. Positions 453–467 (SQSQPGSRSGSPGRV) are enriched in low complexity. Residues serine 455, serine 459, serine 463, serine 478, and serine 489 each carry the phosphoserine modification. The segment at 488-557 (ASAQKRSKIP…PLASRHHSRS (70 aa)) is disordered. An SXIP motif 1; mediates interaction with MAPRE1 and targeting to microtubule plus ends motif is present at residues 494-497 (SKIP). Serine 507 carries the post-translational modification Phosphoserine. Positions 517–520 (SRIP) match the SXIP motif 2; mediates interaction with MAPRE1 and targeting to microtubule plus ends motif. Residues serine 525, serine 529, serine 585, serine 587, serine 596, serine 621, and serine 627 each carry the phosphoserine modification. The segment at 617–645 (YGMHSDDDANSDASSACSERSYSSRNGSI) is disordered. A compositionally biased stretch (low complexity) spans 627 to 641 (SDASSACSERSYSSR). Residues 649–881 (MRQTEDVAEV…TKLLHNHLRN (233 aa)) are TOG 2. 2 HEAT repeats span residues 710-747 (RVFSMFLETLVDFIQVHKDDLQDWLFVLLTQLLKKMGA) and 772-809 (LQFNILMRFTVDQTQTPSLKVKVAILKYIETLAKQMDP). A Phosphothreonine modification is found at threonine 787. The interaction with RSN and localization to the Golgi and kinetochores stretch occupies residues 872–1294 (TKLLHNHLRN…DPTTDVSGQS (423 aa)). Disordered stretches follow at residues 878–928 (HLRN…FDYD) and 952–995 (SFRS…DSSQ). 2 stretches are compositionally biased toward polar residues: residues 880–892 (RNTGNGTQSSMGS) and 901–922 (SPANWSSPLTSPTNTSQNTLSP). At serine 892 the chain carries Phosphoserine. Serine 952, serine 955, serine 1013, and serine 1029 each carry phosphoserine. Residues 955 to 972 (SQEDMNEPLKRDSKKDDG) are compositionally biased toward basic and acidic residues. Residues 1017–1294 (RDYNPYNYSD…DPTTDVSGQS (278 aa)) are required for cortical localization. 3 HEAT repeats span residues 1054-1091 (LDHSDLVAELLKELSNHNERVEERKIALYELMKLTQEE), 1098-1135 (EHFKTILLLLLETLGDKEPTIRALALKVLREILRHQPA), and 1216-1253 (LLLPEIMPGLIQGYDNSESSVRKACVFCLVAVHAVIGD).

It belongs to the CLASP family. Interacts with microtubules. Interacts with MAPRE1; probably required for targeting to the growing microtubule plus ends. Interacts with CLIP2, ERC1, MAPRE3, PHLDB2 and RSN. The interaction with ERC1 may be mediated by PHLDB2. Interacts with GCC2; recruits CLASP2 to Golgi membranes. Interacts with MACF1. Interacts with mtcl2 and MTCL1. In terms of processing, phosphorylated by GSK3B. Phosphorylation reduces MAPRE1 binding. Phosphorylation by GSK3B may negatively regulate binding to microtubule lattices in lamella. Brain-specific.

The protein localises to the cytoplasm. Its subcellular location is the cytoskeleton. It is found in the microtubule organizing center. The protein resides in the centrosome. It localises to the chromosome. The protein localises to the centromere. Its subcellular location is the kinetochore. It is found in the spindle. The protein resides in the golgi apparatus. It localises to the trans-Golgi network. The protein localises to the cell membrane. Its subcellular location is the cell projection. It is found in the ruffle membrane. The protein resides in the cell cortex. Microtubule plus-end tracking protein that promotes the stabilization of dynamic microtubules. Involved in the nucleation of noncentrosomal microtubules originating from the trans-Golgi network (TGN). Required for the polarization of the cytoplasmic microtubule arrays in migrating cells towards the leading edge of the cell. May act at the cell cortex to enhance the frequency of rescue of depolymerizing microtubules by attaching their plus-ends to cortical platforms composed of ERC1 and PHLDB2. This cortical microtubule stabilizing activity is regulated at least in part by phosphatidylinositol 3-kinase signaling. Also performs a similar stabilizing function at the kinetochore which is essential for the bipolar alignment of chromosomes on the mitotic spindle. Acts as a mediator of ERBB2-dependent stabilization of microtubules at the cell cortex. This is CLIP-associating protein 2 (CLASP2) from Homo sapiens (Human).